Reading from the N-terminus, the 375-residue chain is Probable G-protein coupled receptor 27 (375 aa).

The Extracellular segment spans residues 1 to 23; the sequence is MANASEPGGSGGGEAAALGLKLA. An N-linked (GlcNAc...) asparagine glycan is attached at N3. The helical transmembrane segment at 24–44 threads the bilayer; it reads TLSLLLCVSLAGNVLFALLIV. At 45–55 the chain is on the cytoplasmic side; that stretch reads RERSLHRAPYY. Residues 56 to 76 traverse the membrane as a helical segment; the sequence is LLLDLCLADGLRALACLPAVM. The Extracellular segment spans residues 77–97; that stretch reads LAARRAAAAAGAPPGALGCKL. A disulfide bridge connects residues C95 and C171. A helical transmembrane segment spans residues 98–118; the sequence is LAFLAALFCFHAAFLLLGVGV. Topologically, residues 119–139 are cytoplasmic; the sequence is TRYLAIAHHRFYAERLAGWPC. A helical membrane pass occupies residues 140–160; the sequence is AAMLVCAAWALALAAAFPPVL. Residues 161-181 are Extracellular-facing; that stretch reads DGGGDDEDAPCALEQRPDGAP. A helical membrane pass occupies residues 182–202; that stretch reads GALGFLLLLAVVVGATHLVYL. Residues 203-285 are Cytoplasmic-facing; sequence RLLFFIHDRR…FKTEKRLCKM (83 aa). The chain crosses the membrane as a helical span at residues 286–306; that stretch reads FYAVTLLFLLLWGPYVVASYL. Residues 307 to 320 lie on the Extracellular side of the membrane; the sequence is RVLVRPGAVPQAYL. Residues 321-341 form a helical membrane-spanning segment; sequence TASVWLTFAQAGINPVVCFLF. Over 342–375 the chain is Cytoplasmic; the sequence is NRELRDCFRAQFPCCQSPRTTQATHPCDLKGIGL.

Belongs to the G-protein coupled receptor 1 family. Highly expressed as a 3.0 kb transcript in brain, ovary, testis, heart, prostate and peripheral Leukocytes. Lower levels in pancreas and small intestine. A 2.3 kb transcript was also found in peripheral Leukocytes. In brain regions, detected as a 3.0 kb transcript in all regions tested. Highest levels in the caudate nucleus, putamen, hippocampus and subthalamic nucleus. Lowest level in the cerebellum.

The protein localises to the cell membrane. Functionally, orphan receptor. Possible candidate for amine-like G-protein coupled receptor. The chain is Probable G-protein coupled receptor 27 (GPR27) from Homo sapiens (Human).